The sequence spans 293 residues: MATNIGMMDSAYFVGRNEILSWINDRLHLNLSRIEEAASGAVQCQMLDMTFPGVVPMHKVNFEAKNEYEMIQNYKVMQEVFTKLKITKPLEVNRLVKGRPLDNLEFLQWLKRFCDSINGGIMNENYNPVERRSRGGREKSVKGSSKISKSLQTNNMHHPPVATSNKPAGPKQAKSHGIGGGSNSSAEVQALSKEVEDLKVSVDLLEKERDFYFSKLRDIEILCQTPELDDLPIVVAVKKILYATDANESVLEEAQECLNQSLGLEGYEEEGKEEEEEEEEEEEEAAAAAETQT.

The 103-residue stretch at 13 to 115 (FVGRNEILSW…FLQWLKRFCD (103 aa)) folds into the Calponin-homology (CH) domain. Disordered stretches follow at residues 124–188 (ENYN…SAEV) and 262–293 (LGLE…ETQT). A compositionally biased stretch (basic and acidic residues) spans 129 to 141 (VERRSRGGREKSV). Residues 151–166 (LQTNNMHHPPVATSNK) show a composition bias toward polar residues. The EB1 C-terminal domain occupies 180 to 250 (GGSNSSAEVQ…LYATDANESV (71 aa)). Positions 266 to 285 (GYEEEGKEEEEEEEEEEEEA) are enriched in acidic residues.

The protein belongs to the MAPRE family. In terms of assembly, homodimer and heterodimer with EB1A. As to expression, highly expressed in guard cells of leaf stomata, pollen grains and pollen tubes. Expressed in young roots.

The protein localises to the cytoplasm. Its subcellular location is the cytoskeleton. It is found in the spindle pole. The protein resides in the phragmoplast. Binds to the plus end of microtubules and regulates the dynamics of the microtubule cytoskeleton. May be involved in anchoring microtubules to their nucleation sites and/or functioning as a reservoir for distribution to the growing end. In plants, microtubule minus ends are not necessarily severed from the nucleation site and transported to the plus end of a microtubule as part of the recycling process. May play a role in endomembrane organization during polarized growth of plant cells. This chain is Microtubule-associated protein RP/EB family member 1B (EB1B), found in Arabidopsis thaliana (Mouse-ear cress).